The chain runs to 706 residues: Fatty acid oxidation complex subunit alpha (706 aa).

The tract at residues 1–188 is enoyl-CoA hydratase; that stretch reads MEKTFNLTRR…KMGLVNDVVP (188 aa). Residues 308 to 706 are 3-hydroxyacyl-CoA dehydrogenase; the sequence is RKVKKAVILG…TMAQENAHFF (399 aa).

This sequence in the N-terminal section; belongs to the enoyl-CoA hydratase/isomerase family. It in the central section; belongs to the 3-hydroxyacyl-CoA dehydrogenase family. Heterotetramer of two alpha chains (FadJ) and two beta chains (FadI).

It localises to the cytoplasm. It catalyses the reaction a (3S)-3-hydroxyacyl-CoA = a (2E)-enoyl-CoA + H2O. It carries out the reaction a 4-saturated-(3S)-3-hydroxyacyl-CoA = a (3E)-enoyl-CoA + H2O. The catalysed reaction is a (3S)-3-hydroxyacyl-CoA + NAD(+) = a 3-oxoacyl-CoA + NADH + H(+). The enzyme catalyses (3S)-3-hydroxybutanoyl-CoA = (3R)-3-hydroxybutanoyl-CoA. Its pathway is lipid metabolism; fatty acid beta-oxidation. Its function is as follows. Catalyzes the formation of a hydroxyacyl-CoA by addition of water on enoyl-CoA. Also exhibits 3-hydroxyacyl-CoA epimerase and 3-hydroxyacyl-CoA dehydrogenase activities. The sequence is that of Fatty acid oxidation complex subunit alpha from Shewanella baltica (strain OS155 / ATCC BAA-1091).